Reading from the N-terminus, the 51-residue chain is Large ribosomal subunit protein eL39 (51 aa).

It belongs to the eukaryotic ribosomal protein eL39 family.

The chain is Large ribosomal subunit protein eL39 from Methanobrevibacter smithii (strain ATCC 35061 / DSM 861 / OCM 144 / PS).